A 493-amino-acid polypeptide reads, in one-letter code: Accumulates dyads protein 4 (493 aa).

As to quaternary structure, interacts with CNM67, SPO21/MPC70 and NUD1.

The protein resides in the cytoplasm. It localises to the cytoskeleton. Its subcellular location is the microtubule organizing center. It is found in the spindle pole body. Involved in the pathway that organizes the shaping and sizing of the prospore membrane (PSM) during sporulation. May be required to stabilize the outer plaque of the spindle pole body (SPB). The chain is Accumulates dyads protein 4 (ADY4) from Saccharomyces cerevisiae (strain ATCC 204508 / S288c) (Baker's yeast).